A 126-amino-acid polypeptide reads, in one-letter code: Holo-[acyl-carrier-protein] synthase (126 aa).

Mg(2+) is bound by residues Asp-8 and Glu-57.

It belongs to the P-Pant transferase superfamily. AcpS family. Mg(2+) is required as a cofactor.

It is found in the cytoplasm. The catalysed reaction is apo-[ACP] + CoA = holo-[ACP] + adenosine 3',5'-bisphosphate + H(+). Its function is as follows. Transfers the 4'-phosphopantetheine moiety from coenzyme A to a Ser of acyl-carrier-protein. This is Holo-[acyl-carrier-protein] synthase from Geobacter metallireducens (strain ATCC 53774 / DSM 7210 / GS-15).